Here is a 293-residue protein sequence, read N- to C-terminus: Ribosomal RNA small subunit methyltransferase A (293 aa).

S-adenosyl-L-methionine is bound by residues Asn29, Leu31, Gly56, Glu77, Asp102, and Asn127.

It belongs to the class I-like SAM-binding methyltransferase superfamily. rRNA adenine N(6)-methyltransferase family. RsmA subfamily.

The protein localises to the cytoplasm. The enzyme catalyses adenosine(1518)/adenosine(1519) in 16S rRNA + 4 S-adenosyl-L-methionine = N(6)-dimethyladenosine(1518)/N(6)-dimethyladenosine(1519) in 16S rRNA + 4 S-adenosyl-L-homocysteine + 4 H(+). Its function is as follows. Specifically dimethylates two adjacent adenosines (A1518 and A1519) in the loop of a conserved hairpin near the 3'-end of 16S rRNA in the 30S particle. May play a critical role in biogenesis of 30S subunits. The sequence is that of Ribosomal RNA small subunit methyltransferase A from Geobacillus kaustophilus (strain HTA426).